Consider the following 301-residue polypeptide: Glycine--tRNA ligase alpha subunit (301 aa).

Belongs to the class-II aminoacyl-tRNA synthetase family. In terms of assembly, tetramer of two alpha and two beta subunits.

It localises to the cytoplasm. It carries out the reaction tRNA(Gly) + glycine + ATP = glycyl-tRNA(Gly) + AMP + diphosphate. The sequence is that of Glycine--tRNA ligase alpha subunit from Pseudoalteromonas atlantica (strain T6c / ATCC BAA-1087).